The sequence spans 638 residues: DNA gyrase subunit B (638 aa).

One can recognise a Toprim domain in the interval 431 to 545; that stretch reads RELFIVEGNS…YGFVYIAQPP (115 aa). Mg(2+) is bound by residues E437, D510, and D512.

It belongs to the type II topoisomerase GyrB family. Heterotetramer, composed of two GyrA and two GyrB chains. In the heterotetramer, GyrA contains the active site tyrosine that forms a transient covalent intermediate with DNA, while GyrB binds cofactors and catalyzes ATP hydrolysis. Requires Mg(2+) as cofactor. Mn(2+) is required as a cofactor. The cofactor is Ca(2+).

Its subcellular location is the cytoplasm. The catalysed reaction is ATP-dependent breakage, passage and rejoining of double-stranded DNA.. In terms of biological role, a type II topoisomerase that negatively supercoils closed circular double-stranded (ds) DNA in an ATP-dependent manner to modulate DNA topology and maintain chromosomes in an underwound state. Negative supercoiling favors strand separation, and DNA replication, transcription, recombination and repair, all of which involve strand separation. Also able to catalyze the interconversion of other topological isomers of dsDNA rings, including catenanes and knotted rings. Type II topoisomerases break and join 2 DNA strands simultaneously in an ATP-dependent manner. The polypeptide is DNA gyrase subunit B (Metamycoplasma arthritidis (Mycoplasma arthritidis)).